The following is an 87-amino-acid chain: Putative septation protein SpoVG (87 aa).

This sequence belongs to the SpoVG family.

In terms of biological role, could be involved in septation. This chain is Putative septation protein SpoVG, found in Agathobacter rectalis (strain ATCC 33656 / DSM 3377 / JCM 17463 / KCTC 5835 / VPI 0990) (Eubacterium rectale).